The sequence spans 847 residues: Matrin-3 (847 aa).

Ser2 is modified (N-acetylserine). Lys3 is modified (N6-acetyllysine; alternate). Lys3 is covalently cross-linked (Glycyl lysine isopeptide (Lys-Gly) (interchain with G-Cter in SUMO2); alternate). Phosphoserine occurs at positions 4, 9, 11, 14, 22, 41, 118, and 126. Glycyl lysine isopeptide (Lys-Gly) (interchain with G-Cter in SUMO2) cross-links involve residues Lys132 and Lys146. Disordered regions lie at residues 146 to 174 (KRRRTEEGPTLSYGRDGRSATREPPYRVP) and 187 to 214 (DSFDDRGPSLNPVLDYDHGSRSQESGYY). Phosphothreonine is present on Thr150. Ser157 is subject to Phosphoserine. Tyr158 is modified (phosphotyrosine). The segment covering 160 to 174 (RDGRSATREPPYRVP) has biased composition (basic and acidic residues). 3 positions are modified to phosphoserine: Ser164, Ser188, and Ser195. A compositionally biased stretch (basic and acidic residues) spans 201–214 (DYDHGSRSQESGYY). Phosphotyrosine is present on Tyr202. 3 positions are modified to phosphoserine: Ser206, Ser208, and Ser211. Tyr219 carries the phosphotyrosine modification. Ser234 is subject to Phosphoserine. Lys245 is covalently cross-linked (Glycyl lysine isopeptide (Lys-Gly) (interchain with G-Cter in SUMO2)). Position 264 is a phosphoserine (Ser264). Lys269 participates in a covalent cross-link: Glycyl lysine isopeptide (Lys-Gly) (interchain with G-Cter in SUMO2). A Phosphoserine modification is found at Ser275. A disordered region spans residues 342 to 394 (PFMLQQSTNPAPGILGPPPPSFHLGGPAVGPRGNLGAGNGNLQGPRHMQKGRV). One can recognise an RRM 1 domain in the interval 398-473 (RVVHIMDFQR…KPVRVHLSQK (76 aa)). Glycyl lysine isopeptide (Lys-Gly) (interchain with G-Cter in SUMO2) cross-links involve residues Lys478, Lys487, and Lys491. Positions 496 to 571 (RVIHLSNLPH…RCVKVDLSEK (76 aa)) constitute an RRM 2 domain. 2 positions are modified to phosphoserine: Ser509 and Ser511. A Glycyl lysine isopeptide (Lys-Gly) (interchain with G-Cter in SUMO2) cross-link involves residue Lys515. An N6-acetyllysine; alternate modification is found at Lys522. Lys522 participates in a covalent cross-link: Glycyl lysine isopeptide (Lys-Gly) (interchain with G-Cter in SUMO2); alternate. At Ser533 the chain carries Phosphoserine. Residues Lys554 and Lys555 each participate in a glycyl lysine isopeptide (Lys-Gly) (interchain with G-Cter in SUMO2) cross-link. An N6-acetyllysine modification is found at Lys571. The disordered stretch occupies residues 588–786 (KKDKSRKRSY…DEYRIGPYQP (199 aa)). Phosphoserine occurs at positions 596, 598, 604, and 606. Residues 600-643 (DGKESPSDKKSKTDGSQKTESSTEGKEQEEKSGEDGEKDTKDDQ) are compositionally biased toward basic and acidic residues. Glycyl lysine isopeptide (Lys-Gly) (interchain with G-Cter in SUMO2) cross-links involve residues Lys617 and Lys630. Residues 653-665 (ESEDELLVDEEEA) are compositionally biased toward acidic residues. Phosphoserine is present on residues Ser654, Ser671, Ser673, and Ser674. Residues 666–676 (AALLESGSSVG) are compositionally biased toward low complexity. Thr679 carries the post-translational modification Phosphothreonine. Position 689 is a phosphoserine (Ser689). Positions 689–704 (SDGKKEPSDKAVKKDG) are enriched in basic and acidic residues. The Nuclear localization signal signature appears at 710 to 718 (AKKKLKKVD). Glycyl lysine isopeptide (Lys-Gly) (interchain with G-Cter in SUMO2) cross-links involve residues Lys719 and Lys736. A Phosphothreonine modification is found at Thr741. Phosphoserine is present on residues Ser747, Ser759, and Ser766. Basic and acidic residues predominate over residues 767–780 (DENKDDYTIPDEYR). A Glycyl lysine isopeptide (Lys-Gly) (interchain with G-Cter in SUMO2) cross-link involves residue Lys770. The Matrin-type zinc finger occupies 801–832 (FYCKLCSLFYTNEEVAKNTHCSSLPHYQKLKK). Lys836 is subject to N6-acetyllysine; alternate. Lys836 is covalently cross-linked (Glycyl lysine isopeptide (Lys-Gly) (interchain with G-Cter in SUMO2); alternate).

In terms of assembly, part of a complex consisting of SFPQ, NONO and MATR3. Interacts with AGO1 and AGO2. Part of a complex composed at least of ASH2L, EMSY, HCFC1, HSPA8, CCAR2, MATR3, MKI67, RBBP5, TUBB2A, WDR5 and ZNF335; this complex may have a histone H3-specific methyltransferase activity. Interacts with TARDBP. Part of the HDP-RNP complex composed of at least HEXIM1, PRKDC, XRCC5, XRCC6, paraspeckle proteins (SFPQ, NONO, PSPC1, RBM14, and MATR3) and NEAT1 RNA. Interacts with FUS. Interacts with IGF2BP1; the interaction is enhanced by SEPIN14P20 peptide RBPR. Interacts with IGF2BP2 and IGF2BP3. Interacts with RBPMS.

The protein resides in the nucleus matrix. May play a role in transcription or may interact with other nuclear matrix proteins to form the internal fibrogranular network. In association with the SFPQ-NONO heteromer may play a role in nuclear retention of defective RNAs. Plays a role in the regulation of DNA virus-mediated innate immune response by assembling into the HDP-RNP complex, a complex that serves as a platform for IRF3 phosphorylation and subsequent innate immune response activation through the cGAS-STING pathway. Binds to N6-methyladenosine (m6A)-containing mRNAs and contributes to MYC stability by binding to m6A-containing MYC mRNAs. May bind to specific miRNA hairpins. The protein is Matrin-3 (MATR3) of Homo sapiens (Human).